Reading from the N-terminus, the 246-residue chain is DNA repair protein RecO (246 aa).

The protein belongs to the RecO family.

Functionally, involved in DNA repair and RecF pathway recombination. In Methylorubrum extorquens (strain CM4 / NCIMB 13688) (Methylobacterium extorquens), this protein is DNA repair protein RecO.